We begin with the raw amino-acid sequence, 820 residues long: Trimethylamine-N-oxide reductase (820 aa).

Residues 1 to 33 (MAITRRSFLKGVATTSAASVIGPSLLASASANA) constitute a signal peptide (tat-type signal). Mo-bis(molybdopterin guanine dinucleotide) is bound at residue serine 179.

It belongs to the prokaryotic molybdopterin-containing oxidoreductase family. Requires Mo-bis(molybdopterin guanine dinucleotide) as cofactor. In terms of processing, predicted to be exported by the Tat system. The position of the signal peptide cleavage has not been experimentally proven.

It localises to the periplasm. It catalyses the reaction trimethylamine + 2 Fe(III)-[cytochrome c] + H2O = trimethylamine N-oxide + 2 Fe(II)-[cytochrome c] + 3 H(+). In terms of biological role, reduces trimethylamine-N-oxide (TMAO) into trimethylamine; an anaerobic reaction coupled to energy-yielding reactions. This Vibrio vulnificus (strain YJ016) protein is Trimethylamine-N-oxide reductase (torA).